Here is a 165-residue protein sequence, read N- to C-terminus: Large ribosomal subunit protein uL10 (165 aa).

This sequence belongs to the universal ribosomal protein uL10 family. Part of the ribosomal stalk of the 50S ribosomal subunit. The N-terminus interacts with L11 and the large rRNA to form the base of the stalk. The C-terminus forms an elongated spine to which L12 dimers bind in a sequential fashion forming a multimeric L10(L12)X complex.

In terms of biological role, forms part of the ribosomal stalk, playing a central role in the interaction of the ribosome with GTP-bound translation factors. In Shewanella piezotolerans (strain WP3 / JCM 13877), this protein is Large ribosomal subunit protein uL10.